The primary structure comprises 482 residues: ATP synthase subunit beta (482 aa).

ATP is bound at residue glycine 168–threonine 175.

Belongs to the ATPase alpha/beta chains family. In terms of assembly, F-type ATPases have 2 components, CF(1) - the catalytic core - and CF(0) - the membrane proton channel. CF(1) has five subunits: alpha(3), beta(3), gamma(1), delta(1), epsilon(1). CF(0) has three main subunits: a(1), b(2) and c(9-12). The alpha and beta chains form an alternating ring which encloses part of the gamma chain. CF(1) is attached to CF(0) by a central stalk formed by the gamma and epsilon chains, while a peripheral stalk is formed by the delta and b chains.

It localises to the cell membrane. The enzyme catalyses ATP + H2O + 4 H(+)(in) = ADP + phosphate + 5 H(+)(out). Produces ATP from ADP in the presence of a proton gradient across the membrane. The catalytic sites are hosted primarily by the beta subunits. The sequence is that of ATP synthase subunit beta from Corynebacterium urealyticum (strain ATCC 43042 / DSM 7109).